We begin with the raw amino-acid sequence, 353 residues long: Mas-related G-protein coupled receptor member B5 (353 aa).

The Extracellular portion of the chain corresponds to 1 to 67 (MPDSPTESYG…SCIITFNTLN (67 aa)). Asn26 and Asn44 each carry an N-linked (GlcNAc...) asparagine glycan. A helical membrane pass occupies residues 68-90 (FLTATISVVGTAGNATVLRLLGF). Residues 91-96 (HMHRYA) lie on the Cytoplasmic side of the membrane. Residues 97-117 (FSVYVFNLAGADFLYLCTQTV) traverse the membrane as a helical segment. The Extracellular segment spans residues 118-131 (YSLECVLQFDNSYF). Residues 132–152 (YFLLTILMFAYLAALCMIPAI) form a helical membrane-spanning segment. Residues 153-180 (STERCLSVTWPIWYHCQRPRHTSATVCA) are Cytoplasmic-facing. The chain crosses the membrane as a helical span at residues 181–201 (LFWAFSLLLRLLLGQGCGFLF). The Extracellular segment spans residues 202 to 213 (GKYDYYFCRYCS). A helical membrane pass occupies residues 214–234 (FITTAFLIVLFVVPFVSSLAM). At 235-253 (LTKIICGSHRIPVTRFYVT) the chain is on the cytoplasmic side. Residues 254 to 274 (IAVTVLVFTFFGLPVGIISLL) form a helical membrane-spanning segment. Residues 275–289 (LPRIVVFRGVFYIYK) lie on the Extracellular side of the membrane. The chain crosses the membrane as a helical span at residues 290 to 310 (IVTFLYSVNCCANPIIYFLIG). Residues 311–353 (SIRHHRLQRQSLKLLLQRAMQDTPEEEGGVKGPSQKSNELEIV) are Cytoplasmic-facing. Positions 333 to 353 (TPEEEGGVKGPSQKSNELEIV) are disordered.

Belongs to the G-protein coupled receptor 1 family. Mas subfamily. Expressed strongly in newborn dorsal root ganglia, adult dorsal root ganglia and trigeminal ganlia.

It is found in the membrane. In terms of biological role, orphan receptor. Probably involved in the function of nociceptive neurons. May regulate nociceptor function and/or development, including the sensation or modulation of pain. This Rattus norvegicus (Rat) protein is Mas-related G-protein coupled receptor member B5 (Mrgprb5).